We begin with the raw amino-acid sequence, 134 residues long: Retinoid-binding protein 7 (134 aa).

Belongs to the calycin superfamily. Fatty-acid binding protein (FABP) family. As to expression, highly expressed in white adipose tissue and mammary gland.

The protein resides in the cytoplasm. In terms of biological role, intracellular transport of retinol. This Mus musculus (Mouse) protein is Retinoid-binding protein 7 (Rbp7).